The chain runs to 271 residues: MISLKAPHNNLMPYTQQSILNTVKNNQLPEDIKSSLVSCVDIFKVLIKQYYDYPYDCRDDLVDDDKLIHLMAAVRDCEWSDDNALTINVQFNDFPGFYDWMDYPDHPVKFVFHILENQKGTVWVYDQDDAFLDIKANVQAGRFTGLKKLVQFIDSVRTDCKCILLEYHMPLLRIFPKGKECMHVEKWLREMSSIPETDAPIKQALAHGLLLHLKNIYPVFPESLVMLLLSVLDVKTYRDDARLNEWISNRVQELGDRYYPVNKHVKIRYTL.

This is an uncharacterized protein from Escherichia coli (strain K12).